The following is a 516-amino-acid chain: 3-ketoacyl-CoA synthase 4 (516 aa).

The next 2 helical transmembrane spans lie at 48–68 (LISN…SVEA) and 87–107 (LVSI…YVMT). The 290-residue stretch at 104–393 (YVMTRPRPVY…FFMTLVVKKL (290 aa)) folds into the FAE domain. Residues C248, H327, H411, H415, H444, and N448 contribute to the active site.

The protein belongs to the thiolase-like superfamily. Chalcone/stilbene synthases family. As to expression, expressed at low levels in siliques, flowers, leaves and stems.

It is found in the membrane. It catalyses the reaction a very-long-chain acyl-CoA + malonyl-CoA + H(+) = a very-long-chain 3-oxoacyl-CoA + CO2 + CoA. The protein operates within lipid metabolism; fatty acid biosynthesis. The chain is 3-ketoacyl-CoA synthase 4 from Arabidopsis thaliana (Mouse-ear cress).